Here is a 186-residue protein sequence, read N- to C-terminus: Ferritin heavy chain (186 aa).

In terms of domain architecture, Ferritin-like diiron spans 16–165 (QNYHQDSEAA…DHVTNLRKMG (150 aa)). Residues Glu33, Glu68, His71, Glu113, and Gln147 each contribute to the Fe cation site. Residue Ser184 is modified to Phosphoserine.

The protein belongs to the ferritin family. Oligomer of 24 subunits. There are two types of subunits: L (light) chain and H (heavy) chain. The major chain can be light or heavy, depending on the species and tissue type. The functional molecule forms a roughly spherical shell with a diameter of 12 nm and contains a central cavity into which the insoluble mineral iron core is deposited. Interacts with NCOA4; NCOA4 promotes targeting of the iron-binding ferritin complex to autolysosomes following starvation or iron depletion.

Its subcellular location is the cytoplasm. The protein resides in the lysosome. The protein localises to the cytoplasmic vesicle. It localises to the autophagosome. The enzyme catalyses 4 Fe(2+) + O2 + 4 H(+) = 4 Fe(3+) + 2 H2O. Stores iron in a soluble, non-toxic, readily available form. Important for iron homeostasis. Has ferroxidase activity. Iron is taken up in the ferrous form and deposited as ferric hydroxides after oxidation. Also plays a role in delivery of iron to cells. Mediates iron uptake in capsule cells of the developing kidney. Delivery to lysosomes is mediated by the cargo receptor NCOA4 for autophagic degradation and release of iron. The protein is Ferritin heavy chain (FTH1) of Cricetulus griseus (Chinese hamster).